The chain runs to 130 residues: Mini-ribonuclease 3 (130 aa).

Asp-19 is a catalytic residue. The tract at residues 69 to 91 is disordered; that stretch reads EQDVVRRGRNAKGHGAPKSADPA.

It belongs to the MrnC RNase family. Homodimer. It depends on Mg(2+) as a cofactor.

It is found in the cytoplasm. Its function is as follows. Involved in correct processing of both the 5' and 3' ends of 23S rRNA precursor. Processes 30S rRNA precursor transcript even in absence of ribonuclease 3 (Rnc); Rnc processes 30S rRNA into smaller rRNA precursors. In Symbiobacterium thermophilum (strain DSM 24528 / JCM 14929 / IAM 14863 / T), this protein is Mini-ribonuclease 3.